The chain runs to 138 residues: Membrane glycoprotein UL139 (138 aa).

The N-terminal stretch at 1–15 (MLWILVLFALAASAS) is a signal peptide. The disordered stretch occupies residues 17–37 (TTTGTSSNSSQSTSAGTTNTT). Residues 64 to 84 (GWTLSGLLLIFTCCLCCFWLV) form a helical membrane-spanning segment. Polar residues predominate over residues 113–129 (SDATLPMGTTGSYTPPQ). Residues 113 to 138 (SDATLPMGTTGSYTPPQDGSFPPPPR) are disordered.

The protein localises to the host membrane. The polypeptide is Membrane glycoprotein UL139 (UL139) (Homo sapiens (Human)).